The sequence spans 268 residues: Secreted RxLR effector protein 5 (268 aa).

Positions 1-21 (MRGAFYMAITLFLARSRSATA) are cleaved as a signal peptide. A RxLR-dEER motif is present at residues 48-63 (RYLRDGLALSAANEER). N-linked (GlcNAc...) asparagine glycosylation occurs at Asn104.

This sequence belongs to the RxLR effector family.

It is found in the secreted. It localises to the host nucleus. Effector that acts as a broad suppressor of cell death to interrupt plant immunity. Inhibits cell death induced by cell death-inducing proteins, including the PAMP elicitor INF1 from P.infestans. In Plasmopara viticola (Downy mildew of grapevine), this protein is Secreted RxLR effector protein 5.